A 101-amino-acid chain; its full sequence is Small ribosomal subunit protein uS14 (101 aa).

This sequence belongs to the universal ribosomal protein uS14 family. In terms of assembly, part of the 30S ribosomal subunit. Contacts proteins S3 and S10.

Functionally, binds 16S rRNA, required for the assembly of 30S particles and may also be responsible for determining the conformation of the 16S rRNA at the A site. This is Small ribosomal subunit protein uS14 from Orientia tsutsugamushi (strain Boryong) (Rickettsia tsutsugamushi).